The primary structure comprises 1116 residues: Large proline-rich protein bag6-B (1116 aa).

In terms of domain architecture, Ubiquitin-like spans 7 to 82 (MDVTVKTLDS…HLVERAPPQT (76 aa)). Disordered regions lie at residues 76–114 (ERAP…RNGN), 170–221 (EGQP…PSEY), 329–385 (STTG…HPHP), 473–502 (PAAP…APGA), 533–589 (GGSS…GTDQ), 640–678 (VPVS…ESLP), and 1058–1080 (TGAK…EAQG). Low complexity predominate over residues 79 to 100 (PPQTQTSTSGPSTSSSTSPSSS). The segment covering 194 to 207 (RETLPQTTQNADGQ) has biased composition (polar residues). Residues 208–219 (SNSTPTSHPSPS) are compositionally biased toward low complexity. Positions 344–353 (GNATPSTNTS) are enriched in polar residues. 3 stretches are compositionally biased toward low complexity: residues 482–502 (PGAA…APGA), 535–580 (SSTS…SVPS), and 641–652 (PVSTSPPQSASQ). Residues 653–672 (APPPPSSPAPPAHSAPPPAA) show a composition bias toward pro residues. Residues 1068 to 1080 (CVKRELDNSEAQG) show a composition bias toward basic and acidic residues.

In terms of assembly, component of the bag6/bat3 complex.

It localises to the cytoplasm. The protein resides in the cytosol. The protein localises to the nucleus. It is found in the secreted. Its subcellular location is the extracellular exosome. ATP-independent molecular chaperone preventing the aggregation of misfolded and hydrophobic patches-containing proteins. Functions as part of a cytosolic protein quality control complex, the bag6/bat3 complex, which maintains these client proteins in a soluble state and participates in their proper delivery to the endoplasmic reticulum or alternatively can promote their sorting to the proteasome where they undergo degradation. The bag6/bat3 complex is involved in the post-translational delivery of tail-anchored/type II transmembrane proteins to the endoplasmic reticulum membrane. Similarly, the bag6/bat3 complex also functions as a sorting platform for proteins of the secretory pathway that are mislocalized to the cytosol either delivering them to the proteasome for degradation or to the endoplasmic reticulum. The bag6/bat3 complex also plays a role in the endoplasmic reticulum-associated degradation (ERAD), a quality control mechanism that eliminates unwanted proteins of the endoplasmic reticulum through their retrotranslocation to the cytosol and their targeting to the proteasome. It maintains these retrotranslocated proteins in an unfolded yet soluble state condition in the cytosol to ensure their proper delivery to the proteasome. Also required for selective ubiquitin-mediated degradation of defective nascent chain polypeptides by the proteasome. Also involved in endoplasmic reticulum stress-induced pre-emptive quality control, a mechanism that selectively attenuates the translocation of newly synthesized proteins into the endoplasmic reticulum and reroutes them to the cytosol for proteasomal degradation. May ensure the proper degradation of these proteins and thereby protects the endoplasmic reticulum from protein overload upon stress. By stabilizing a large spectrum of proteins, may indirectly affect different biological processes including apoptosis. By controlling the steady-state expression of the IGF1R receptor, indirectly regulates the insulin-like growth factor receptor signaling pathway. Its function is as follows. When nuclear, may also act as a component of some chromatin regulator complex. The sequence is that of Large proline-rich protein bag6-B from Xenopus laevis (African clawed frog).